The chain runs to 996 residues: Sarcoplasmic/endoplasmic reticulum calcium ATPase 1 (996 aa).

Residues 1–48 (MENAHTKSPAECLSYFGVNEHTGLSPDQFKKNLDKFGYNELPAEEGKS) are Cytoplasmic-facing. Residues 49–69 (IWDLIVEQFEDLLVRILLLAA) traverse the membrane as a helical segment. Topologically, residues 70–89 (CISFVLAWFEEGEETITAFV) are lumenal. A helical transmembrane segment spans residues 90 to 110 (EPFVILLILIANAIVGVWQER). Residues 111-253 (NAEDAIEALK…QEKTPLQAKL (143 aa)) lie on the Cytoplasmic side of the membrane. The chain crosses the membrane as a helical span at residues 254–273 (DEFGEQLSKVISLICVAVWA). Topologically, residues 274–295 (INIGHFNDPVHGGSWIRGAVYY) are lumenal. A helical membrane pass occupies residues 296–313 (FKIAVALAVAAIPEGLPA). 4 residues coordinate Ca(2+): Val304, Ala305, Ile307, and Glu309. Over 314 to 754 (VITTCLALGT…EEGRAIYNNM (441 aa)) the chain is Cytoplasmic. The 4-aspartylphosphate intermediate role is filled by Asp351. Positions 351 and 353 each coordinate Mg(2+). ATP is bound by residues Thr353, Glu442, Arg489, Lys512, Arg557, Thr622, Gly623, Asp624, Arg675, and Lys681. A Mg(2+)-binding site is contributed by Asp700. ATP is bound at residue Asn703. Residues 755–774 (KQFIRYLISSNVGEVVCIFL) form a helical membrane-spanning segment. Ca(2+)-binding residues include Asn765 and Glu768. Topologically, residues 775–784 (TAALGLPEAL) are lumenal. Residues 785 to 805 (IPVQLLWVNLVTDGLPATALG) traverse the membrane as a helical segment. The tract at residues 785–805 (IPVQLLWVNLVTDGLPATALG) is interaction with PLN. Ca(2+) contacts are provided by Asn793, Thr796, and Asp797. At 806–825 (FNPPDLDIMGKPPRSPKEPL) the chain is on the cytoplasmic side. A helical transmembrane segment spans residues 826–848 (ISGWLFFRYMAIGGYVGAATVGG). The Lumenal portion of the chain corresponds to 849–894 (AAWWFLYDSTGPAVTYYQLSHFMQCHNHNEDFTGVDCDIFEASPPM). Cys873 and Cys885 are oxidised to a cystine. Residues 895–914 (TMALSVLVTIEMCNALNSLS) form a helical membrane-spanning segment. Glu905 is a binding site for Ca(2+). Residues 915–927 (ENQSLIRMPPWSN) are Cytoplasmic-facing. A helical membrane pass occupies residues 928–946 (LWLMAAMTLSMSLHFMIIY). The interval 929–940 (WLMAAMTLSMSL) is interaction with PLN. At 947 to 961 (VDPLPMIFKLTHLTF) the chain is on the lumenal side. A helical transmembrane segment spans residues 962-982 (DQWLMVFKLSFPVILIDEVLK). Residues 983 to 996 (FFARNYIETGKEVK) are Cytoplasmic-facing.

Belongs to the cation transport ATPase (P-type) (TC 3.A.3) family. Type IIA subfamily. Interacts with sarcolipin (SLN). Interacts with phospholamban (PLN). Interacts with myoregulin (MRLN). Interacts with DWORF. Requires Mg(2+) as cofactor.

It is found in the endoplasmic reticulum membrane. The protein resides in the sarcoplasmic reticulum membrane. It catalyses the reaction Ca(2+)(in) + ATP + H2O = Ca(2+)(out) + ADP + phosphate + H(+). Inhibited by sarcolipin (SLN) and myoregulin (MRLN). Also shown to be inhibited by phospholamban (PLN) in vitro. Enhanced by DWORF; DWORF increases activity by displacing sarcolipin (SLN), phospholamban (PLN) and myoregulin (MRLN). In terms of biological role, key regulator of striated muscle performance by acting as the major Ca(2+) ATPase responsible for the reuptake of cytosolic Ca(2+) into the sarcoplasmic reticulum. Catalyzes the hydrolysis of ATP coupled with the translocation of calcium from the cytosol to the sarcoplasmic reticulum lumen. Contributes to calcium sequestration involved in muscular excitation/contraction. The sequence is that of Sarcoplasmic/endoplasmic reticulum calcium ATPase 1 (atp2a1) from Makaira nigricans (Atlantic blue marlin).